A 290-amino-acid chain; its full sequence is Sodium/potassium-transporting ATPase subunit beta-2 (290 aa).

The Cytoplasmic segment spans residues 1 to 39 (MVIQKEKKSCGQVVEEWKEFVWNPRTHQFMGRTGTSWAF). The chain crosses the membrane as a helical; Signal-anchor for type II membrane protein span at residues 40–67 (ILLFYLVFYGFLTAMFTLTMWVMLQTVS). At 68–290 (DHTPKYQDRL…VAFKLRINKT (223 aa)) the chain is on the extracellular side. 2 N-linked (GlcNAc...) asparagine glycosylation sites follow: Asn96 and Asn118. Residues Cys129 and Cys150 are joined by a disulfide bond. The N-linked (GlcNAc...) asparagine glycan is linked to Asn153. Cys160 and Cys177 form a disulfide bridge. N-linked (GlcNAc...) asparagine glycosylation is found at Asn193, Asn197, and Asn238. The tract at residues 193–289 (NQSMNVTCVG…RVAFKLRINK (97 aa)) is immunoglobulin-like. The cysteines at positions 200 and 261 are disulfide-linked.

It belongs to the X(+)/potassium ATPases subunit beta family. The sodium/potassium-transporting ATPase is composed of a catalytic alpha subunit, an auxiliary non-catalytic beta subunit and an additional regulatory subunit. Interacts with BSG.

The protein localises to the cell membrane. This is the non-catalytic component of the active enzyme, which catalyzes the hydrolysis of ATP coupled with the exchange of Na(+) and K(+) ions across the plasma membrane. The exact function of the beta-2 subunit is not known. Its function is as follows. Mediates cell adhesion of neurons and astrocytes, and promotes neurite outgrowth. This is Sodium/potassium-transporting ATPase subunit beta-2 (ATP1B2) from Bos taurus (Bovine).